Reading from the N-terminus, the 297-residue chain is HTH-type transcriptional regulator ArgP (297 aa).

The region spanning 4 to 60 (PDYRTLQALDAVIRERGFERAAQKLCITQSAVSQRIKQLENMFGQPLLVRTVPPRPT) is the HTH lysR-type domain. Residues 21-40 (FERAAQKLCITQSAVSQRIK) constitute a DNA-binding region (H-T-H motif).

The protein belongs to the LysR transcriptional regulatory family. In terms of assembly, homodimer.

Its function is as follows. Controls the transcription of genes involved in arginine and lysine metabolism. This is HTH-type transcriptional regulator ArgP from Citrobacter koseri (strain ATCC BAA-895 / CDC 4225-83 / SGSC4696).